We begin with the raw amino-acid sequence, 240 residues long: Arginine transport ATP-binding protein ArtM (240 aa).

One can recognise an ABC transporter domain in the interval 2-236 (IKVEKLSKSF…PKSKRAQDFL (235 aa)). An ATP-binding site is contributed by 34–41 (GPSGSGKS).

Belongs to the ABC transporter superfamily.

The protein localises to the cell membrane. In terms of biological role, part of a binding-protein-dependent transport system for arginine. Probably responsible for energy coupling to the transport system. The sequence is that of Arginine transport ATP-binding protein ArtM (artM) from Bacillus subtilis (strain 168).